We begin with the raw amino-acid sequence, 620 residues long: Glutathione-regulated potassium-efflux system protein KefC (620 aa).

12 consecutive transmembrane segments (helical) span residues 4 to 24 (HTLI…PIAV), 26 to 46 (LGLG…PWGL), 54 to 74 (SILH…GLEL), 90 to 110 (GALQ…LLGL), 114 to 134 (VAEL…MQAM), 149 to 169 (FAVL…IPLL), 178 to 198 (MGAF…VVLL), 218 to 238 (VFSA…EEVG), 270 to 290 (GLLL…GTLL), 294 to 314 (LRIV…LWLI), 327 to 347 (WFAV…GAAQ), and 359 to 379 (SLTL…VILN). The RCK N-terminal domain occupies 399 to 518 (QPRVIIAGFG…AGVEKPERET (120 aa)). A disordered region spans residues 597–620 (GWQGTEEGKHTGNMADEPETKPSS).

It belongs to the monovalent cation:proton antiporter 2 (CPA2) transporter (TC 2.A.37) family. KefC subfamily. As to quaternary structure, homodimer. Interacts with the regulatory subunit KefF.

It localises to the cell inner membrane. Pore-forming subunit of a potassium efflux system that confers protection against electrophiles. Catalyzes K(+)/H(+) antiport. In Escherichia coli O8 (strain IAI1), this protein is Glutathione-regulated potassium-efflux system protein KefC.